The chain runs to 473 residues: tRNA-2-methylthio-N(6)-dimethylallyladenosine synthase (473 aa).

One can recognise an MTTase N-terminal domain in the interval 5–125 (RKLHIKSYGC…LPQLLARAKA (121 aa)). The [4Fe-4S] cluster site is built by cysteine 14, cysteine 50, cysteine 88, cysteine 166, cysteine 170, and cysteine 173. The region spanning 152-384 (RARGISAFVT…QNLIDSQQSA (233 aa)) is the Radical SAM core domain. The 63-residue stretch at 387 to 449 (RAAVGTTVDV…RYSLLGSLAS (63 aa)) folds into the TRAM domain. Low complexity predominate over residues 453–462 (SRASADDAPP). A disordered region spans residues 453 to 473 (SRASADDAPPVGASSPAIMGV).

The protein belongs to the methylthiotransferase family. MiaB subfamily. In terms of assembly, monomer. [4Fe-4S] cluster serves as cofactor.

Its subcellular location is the cytoplasm. The enzyme catalyses N(6)-dimethylallyladenosine(37) in tRNA + (sulfur carrier)-SH + AH2 + 2 S-adenosyl-L-methionine = 2-methylsulfanyl-N(6)-dimethylallyladenosine(37) in tRNA + (sulfur carrier)-H + 5'-deoxyadenosine + L-methionine + A + S-adenosyl-L-homocysteine + 2 H(+). Functionally, catalyzes the methylthiolation of N6-(dimethylallyl)adenosine (i(6)A), leading to the formation of 2-methylthio-N6-(dimethylallyl)adenosine (ms(2)i(6)A) at position 37 in tRNAs that read codons beginning with uridine. The polypeptide is tRNA-2-methylthio-N(6)-dimethylallyladenosine synthase (Nitrobacter hamburgensis (strain DSM 10229 / NCIMB 13809 / X14)).